We begin with the raw amino-acid sequence, 544 residues long: Probable protein kinase UbiB (544 aa).

In terms of domain architecture, Protein kinase spans 123–501; sequence DFDLVPLASA…KRQQATGKFL (379 aa). Residues 129-137 and Lys-152 contribute to the ATP site; that span reads LASASIAQV. Asp-287 (proton acceptor) is an active-site residue. A run of 2 helical transmembrane segments spans residues 496–516 and 519–539; these read ATGK…AILV and TYEQ…LFSW.

The protein belongs to the ABC1 family. UbiB subfamily.

It localises to the cell inner membrane. Its pathway is cofactor biosynthesis; ubiquinone biosynthesis [regulation]. In terms of biological role, is probably a protein kinase regulator of UbiI activity which is involved in aerobic coenzyme Q (ubiquinone) biosynthesis. This chain is Probable protein kinase UbiB, found in Vibrio vulnificus (strain CMCP6).